The primary structure comprises 324 residues: NAD(P)H-dependent D-xylose reductase XYR1 (324 aa).

Tyr50 acts as the Proton donor in catalysis. His112 contributes to the substrate binding site. NAD(+)-binding positions include 168 to 169, 217 to 226, and 273 to 283; these read SN, SSFGPASFKE, and KSSREKTMKSN.

This sequence belongs to the aldo/keto reductase family.

The catalysed reaction is xylitol + NAD(+) = D-xylose + NADH + H(+). It catalyses the reaction xylitol + NADP(+) = D-xylose + NADPH + H(+). It participates in carbohydrate metabolism; D-xylose degradation. Functionally, catalyzes the initial reaction in the xylose utilization pathway by reducing D-xylose into xylitol. Xylose is a major component of hemicelluloses such as xylan. Most fungi utilize D-xylose via three enzymatic reactions, xylose reductase (XR), xylitol dehydrogenase (XDH), and xylulokinase, to form xylulose 5-phosphate, which enters pentose phosphate pathway. In Pyricularia oryzae (strain 70-15 / ATCC MYA-4617 / FGSC 8958) (Rice blast fungus), this protein is NAD(P)H-dependent D-xylose reductase XYR1 (XYR1).